Reading from the N-terminus, the 1334-residue chain is Lysine-specific demethylase 3A-B (1334 aa).

3 disordered regions span residues 243–288, 352–382, and 514–533; these read DQND…KTSF, PGIQNAATPPPANSPPSFGAATPQGKGSQNL, and KPQEPPYTKSPNKTDGVTYP. The span at 267 to 283 shows a compositional bias: basic and acidic residues; the sequence is TEVKQTRNEEVPSKDVT. The C6-type zinc-finger motif lies at 684–709; it reads CDACDTTIFNLHWVCPKCGFGVCVDC. The LXXLL motif signature appears at 897–901; that stretch reads LRNLL. The 206-residue stretch at 1089–1294 folds into the JmjC domain; it reads RREGKLNLAA…HCFCLTQEFR (206 aa). His1133, Asp1135, and His1262 together coordinate Fe cation.

The protein belongs to the JHDM2 histone demethylase family. Fe(2+) is required as a cofactor.

It is found in the cytoplasm. The protein localises to the nucleus. It carries out the reaction N(6),N(6)-dimethyl-L-lysyl(9)-[histone H3] + 2 2-oxoglutarate + 2 O2 = L-lysyl(9)-[histone H3] + 2 formaldehyde + 2 succinate + 2 CO2. In terms of biological role, histone demethylase that specifically demethylates 'Lys-9' of histone H3, thereby playing a central role in histone code. Preferentially demethylates mono- and dimethylated H3 'Lys-9' residue, with a preference for dimethylated residue, while it has weak or no activity on trimethylated H3 'Lys-9'. Demethylation of Lys residue generates formaldehyde and succinate. The sequence is that of Lysine-specific demethylase 3A-B (kdm3a-b) from Xenopus laevis (African clawed frog).